Reading from the N-terminus, the 649-residue chain is MVQITLPDGSQRQYPGPVTVAEVAQSIGAGLAKAALAGRVAFDGAEPRLVDTSFRIDNDAQLAIVTAKDADGLDLIRHSTAHLLAYAVKSLFPDAQVTIGPVIDNGFYYDFSYKRPFTPEDLQAIEKKMAELARKDEVVTREEWSRDEAVAYFKGIGEVYKAEIIASIPSNETLSLYREGDFIDLCRGPHVPSTGKLKVFKLMKVAGAYWRGDSKNEMLQRIYGTAWASKDDQDAYLHMLEEAERRDHRKIGRELDLFHFQDEAPGLIFWHPKGWALWQQVEQYMRKVYQDNGYQEVKAPQILDLTLWKKTGHWDNYRENMFTTESENRVYGLKPMNCPGHVQIFNAGLHSYRELPLRYGEFGQCHRNEPSGSLHGMMRVRGFTQDDGHIFCTEDQLQDECAAFTALLQKVYKDFGFTEVLYKVATRPEKRIGSDEIWDKAETALMESLRRTGCEFEISPGEGAFYGPKVEYTLKDAIGRHWQCGTIQVDFSMPVRLGAEYVDQNDQRRPPVMLHRAILGSLERFIGMLIENHAGAMPPWLAPLQAVVCCISEHSAEYAAQITQSLKKQGFRVQADLRGEKITRKIREHSLQKIPYLLVVGDKEMQNGTVAVRGLGGLDLGVIALDDFIARLAEDISTRRNVTQLASAA.

The TGS domain maps to 1-66 (MVQITLPDGS…DNDAQLAIVT (66 aa)). The segment at 247 to 538 (DHRKIGRELD…LIENHAGAMP (292 aa)) is catalytic. Positions 338, 389, and 515 each coordinate Zn(2+).

The protein belongs to the class-II aminoacyl-tRNA synthetase family. In terms of assembly, homodimer. It depends on Zn(2+) as a cofactor.

The protein localises to the cytoplasm. It catalyses the reaction tRNA(Thr) + L-threonine + ATP = L-threonyl-tRNA(Thr) + AMP + diphosphate + H(+). Functionally, catalyzes the attachment of threonine to tRNA(Thr) in a two-step reaction: L-threonine is first activated by ATP to form Thr-AMP and then transferred to the acceptor end of tRNA(Thr). Also edits incorrectly charged L-seryl-tRNA(Thr). This chain is Threonine--tRNA ligase, found in Bordetella bronchiseptica (strain ATCC BAA-588 / NCTC 13252 / RB50) (Alcaligenes bronchisepticus).